The chain runs to 154 residues: RING finger protein 11 (154 aa).

Over residues 1–12 (MGNCLKSPTSDD) the composition is skewed to polar residues. The tract at residues 1-52 (MGNCLKSPTSDDISLLHESQSDRASFGEGTEPDQEPPPPYQEQVPVPIYHPT) is disordered. Glycine 2 carries N-myristoyl glycine lipidation. Cysteine 4 carries S-palmitoyl cysteine lipidation. Phosphoserine occurs at positions 14 and 25. Residues 37-40 (PPPY) carry the PPxY motif motif. The segment at 99-140 (CVICMMDFVYGDPIRFLPCMHIYHLDCIDDWLMRSFTCPSCM) adopts an RING-type zinc-finger fold. Residue threonine 135 is modified to Phosphothreonine; by PKB/AKT1.

In terms of assembly, interacts (when phosphorylated) with 14-3-3. Interacts with the E3 ubiquitin-ligases NEDD4, ITCH, SMURF2 and WWP1. Also interacts with the E2 ubiquitin-conjugating enzymes UBE2D1 and UBE2N, but neither with CDC34, nor with UBE2L3. Interacts with ZNF350, EPS15 and STAMBP. After TNF stimulation, interacts with TAX1BP1, TNFAIP3 and RIPK1; these interactions are transient and they are lost after 1 hour of stimulation with TNF. Interacts with GGA1. Post-translationally, ubiquitinated in the presence of ITCH, SMURF2 and UBE2D1, as well as WWP1. In terms of processing, phosphorylation by PKB/AKT1 may accelerate degradation by the proteasome. Acylation at both Gly-2 and Cys-4 is required for proper localization to the endosomes.

It is found in the early endosome. The protein resides in the recycling endosome. It localises to the cytoplasm. Its subcellular location is the nucleus. Functionally, essential component of a ubiquitin-editing protein complex, comprising also TNFAIP3, ITCH and TAX1BP1, that ensures the transient nature of inflammatory signaling pathways. Promotes the association of TNFAIP3 to RIPK1 after TNF stimulation. TNFAIP3 deubiquitinates 'Lys-63' polyubiquitin chains on RIPK1 and catalyzes the formation of 'Lys-48'-polyubiquitin chains. This leads to RIPK1 proteasomal degradation and consequently termination of the TNF- or LPS-mediated activation of NF-kappa-B. Recruits STAMBP to the E3 ubiquitin-ligase SMURF2 for ubiquitination, leading to its degradation by the 26S proteasome. This chain is RING finger protein 11 (Rnf11), found in Mus musculus (Mouse).